Reading from the N-terminus, the 392-residue chain is Succinate--CoA ligase [ADP-forming] subunit beta (392 aa).

In terms of domain architecture, ATP-grasp spans 9 to 248; it reads KEILRGFGVT…TSEEDPLEVE (240 aa). ATP is bound by residues lysine 50, 57-59, glutamate 103, methionine 106, and glutamate 111; that span reads GRG. 2 residues coordinate Mg(2+): asparagine 203 and aspartate 217. Substrate contacts are provided by residues asparagine 268 and 325–327; that span reads GIV.

This sequence belongs to the succinate/malate CoA ligase beta subunit family. Heterotetramer of two alpha and two beta subunits. Mg(2+) is required as a cofactor.

The catalysed reaction is succinate + ATP + CoA = succinyl-CoA + ADP + phosphate. It catalyses the reaction GTP + succinate + CoA = succinyl-CoA + GDP + phosphate. It participates in carbohydrate metabolism; tricarboxylic acid cycle; succinate from succinyl-CoA (ligase route): step 1/1. In terms of biological role, succinyl-CoA synthetase functions in the citric acid cycle (TCA), coupling the hydrolysis of succinyl-CoA to the synthesis of either ATP or GTP and thus represents the only step of substrate-level phosphorylation in the TCA. The beta subunit provides nucleotide specificity of the enzyme and binds the substrate succinate, while the binding sites for coenzyme A and phosphate are found in the alpha subunit. In Chloroherpeton thalassium (strain ATCC 35110 / GB-78), this protein is Succinate--CoA ligase [ADP-forming] subunit beta.